Here is a 246-residue protein sequence, read N- to C-terminus: Small ribosomal subunit protein uS2c (246 aa).

It belongs to the universal ribosomal protein uS2 family.

It is found in the plastid. Its subcellular location is the chloroplast. The sequence is that of Small ribosomal subunit protein uS2c (rps2) from Pelargonium hortorum (Common geranium).